Here is a 152-residue protein sequence, read N- to C-terminus: Superoxide dismutase [Cu-Zn] (152 aa).

Residues His-44, His-46, and His-61 each contribute to the Cu cation site. Zn(2+) contacts are provided by His-61, His-69, His-78, and Asp-81. His-118 lines the Cu cation pocket.

The protein belongs to the Cu-Zn superoxide dismutase family. Homodimer. Cu cation serves as cofactor. Requires Zn(2+) as cofactor.

The protein resides in the cytoplasm. The catalysed reaction is 2 superoxide + 2 H(+) = H2O2 + O2. Destroys radicals which are normally produced within the cells and which are toxic to biological systems. The polypeptide is Superoxide dismutase [Cu-Zn] (Drosophila pseudoobscura pseudoobscura (Fruit fly)).